Here is an 895-residue protein sequence, read N- to C-terminus: Serine-rich coiled-coil domain-containing protein 1 (895 aa).

4 disordered regions span residues 1–142, 154–177, 332–394, and 459–497; these read MGDS…KEPS, SGRSEGDDSGFTEEQSRRSIKQST, ELHS…RTLG, and RSSSEGTAGSSRMVLKPKDGHVEASSLRKHRTGSSSSKM. Residues 43-56 are compositionally biased toward low complexity; sequence SSSPSSTNSSSGST. Residues 83–102 show a composition bias toward polar residues; sequence TEQNLSISNGAQPSHSNMQK. A compositionally biased stretch (basic and acidic residues) spans 131-142; that stretch reads LTEDFEREKEPS. Polar residues predominate over residues 348–358; that stretch reads SLQSTELSVGN. Residues 675-705 adopt a coiled-coil conformation; sequence MLRLQLKDRDELISQLQAELEKVQHLQKAFA. The tract at residues 731-753 is disordered; the sequence is QGGRETTHRNRTMSQSHSTRDRK.

The protein belongs to the CCSER family.

This is Serine-rich coiled-coil domain-containing protein 1 (Ccser1) from Mus musculus (Mouse).